Consider the following 103-residue polypeptide: Methanol dehydrogenase [cytochrome c] subunit 2 (103 aa).

Positions 1–20 (MKRILTLTVAALALGTPALA) are cleaved as a signal peptide. Cysteine 26 and cysteine 32 are oxidised to a cystine.

The protein belongs to the methanol dehydrogenase subunit 2 family. Heterotetramer composed of 2 alpha and 2 beta subunits.

Its subcellular location is the periplasm. The enzyme catalyses 2 Fe(III)-[cytochrome cL] + a primary alcohol = 2 Fe(II)-[cytochrome cL] + an aldehyde + 2 H(+). Functionally, catalyzes the oxidation of primary alcohols including methanol. The polypeptide is Methanol dehydrogenase [cytochrome c] subunit 2 (moxI) (Paracoccus denitrificans).